An 844-amino-acid polypeptide reads, in one-letter code: Probable serine/threonine-protein kinase DDB_G0267566 (844 aa).

2 ANK repeats span residues 335 to 367 (KGDT…NANI) and 371 to 400 (KHKV…KPFL). Residues 508–773 (SELGKLIGKG…FEVFQKLKKV (266 aa)) enclose the Protein kinase domain. Residues 514–522 (IGKGANGKV) and lysine 539 contribute to the ATP site. Aspartate 634 (proton acceptor) is an active-site residue.

The protein belongs to the protein kinase superfamily. Ser/Thr protein kinase family.

It catalyses the reaction L-seryl-[protein] + ATP = O-phospho-L-seryl-[protein] + ADP + H(+). It carries out the reaction L-threonyl-[protein] + ATP = O-phospho-L-threonyl-[protein] + ADP + H(+). This is Probable serine/threonine-protein kinase DDB_G0267566 from Dictyostelium discoideum (Social amoeba).